Consider the following 362-residue polypeptide: UDP-arabinopyranose mutase 3 (362 aa).

The short motif at 106 to 108 (DDD) is the DXD motif element. N-linked (Glc...) arginine glycosylation is present at Arg-154.

The protein belongs to the RGP family. In terms of assembly, heterodimer with RGP1. The cofactor is Mn(2+). Requires Mg(2+) as cofactor. In terms of processing, reversibly glycosylated in vitro by UDP-glucose, UDP-xylose and UDP-galactose, but not UDP-mannose. As to expression, specifically expressed in developing seeds.

It is found in the cytoplasm. The protein resides in the cytosol. Its subcellular location is the golgi apparatus. It catalyses the reaction UDP-beta-L-arabinofuranose = UDP-beta-L-arabinopyranose. UDP-L-arabinose mutase involved in the biosynthesis of cell wall non-cellulosic polysaccharides. Catalyzes the interconvertion of UDP-L-arabinopyranose (UDP-Arap) and UDP-L-arabinofuranose (UDP-Araf). Preferentially catalyzes the formation of UDP-Arap from UDP-Araf. At thermodynamic equilibrium in vitro the ratio of the pyranose form over the furanose form is 95:5. Is not active on other UDP-sugars (UDP-Gal, UDP-Xyl, UDP-Glc, GDP-Man and GDP-Fuc). Is probably active as heteromer in vivo. The sequence is that of UDP-arabinopyranose mutase 3 from Arabidopsis thaliana (Mouse-ear cress).